Reading from the N-terminus, the 493-residue chain is Glutamate--tRNA ligase (493 aa).

Positions 10-20 match the 'HIGH' region motif; that stretch reads PSPTGDPHVGT. The 'KMSKS' region motif lies at 251–255; that stretch reads KLSKR. Residue lysine 254 coordinates ATP.

It belongs to the class-I aminoacyl-tRNA synthetase family. Glutamate--tRNA ligase type 1 subfamily. Monomer.

The protein localises to the cytoplasm. The enzyme catalyses tRNA(Glu) + L-glutamate + ATP = L-glutamyl-tRNA(Glu) + AMP + diphosphate. Its function is as follows. Catalyzes the attachment of glutamate to tRNA(Glu) in a two-step reaction: glutamate is first activated by ATP to form Glu-AMP and then transferred to the acceptor end of tRNA(Glu). This Pseudomonas syringae pv. syringae (strain B728a) protein is Glutamate--tRNA ligase.